Consider the following 168-residue polypeptide: Photosystem I assembly protein Ycf3 (168 aa).

TPR repeat units follow at residues 35–68, 72–105, and 120–153; these read AFTY…EIDP, SYIL…NPFL, and GEQA…TPGN.

It belongs to the Ycf3 family.

The protein resides in the plastid. Its subcellular location is the chloroplast thylakoid membrane. Essential for the assembly of the photosystem I (PSI) complex. May act as a chaperone-like factor to guide the assembly of the PSI subunits. This is Photosystem I assembly protein Ycf3 from Ipomoea purpurea (Common morning glory).